The primary structure comprises 280 residues: Energy-coupling factor transporter ATP-binding protein EcfA1 (280 aa).

The region spanning 6-241 (LRTENISFQY…SHMLQEIGLD (236 aa)) is the ABC transporter domain. 40 to 47 (GQNGSGKS) is an ATP binding site.

The protein belongs to the ABC transporter superfamily. Energy-coupling factor EcfA family. As to quaternary structure, forms a stable energy-coupling factor (ECF) transporter complex composed of 2 membrane-embedded substrate-binding proteins (S component), 2 ATP-binding proteins (A component) and 2 transmembrane proteins (T component).

Its subcellular location is the cell membrane. In terms of biological role, ATP-binding (A) component of a common energy-coupling factor (ECF) ABC-transporter complex. Unlike classic ABC transporters this ECF transporter provides the energy necessary to transport a number of different substrates. This Bacillus cereus (strain ZK / E33L) protein is Energy-coupling factor transporter ATP-binding protein EcfA1.